Here is a 337-residue protein sequence, read N- to C-terminus: DNA-directed RNA polymerase subunit alpha (337 aa).

The interval 1 to 233 (MVREEVTIST…NLFIPFLHAE (233 aa)) is alpha N-terminal domain (alpha-NTD). Residues 266–337 (GIALKCIFID…FAMNLPKDFF (72 aa)) are alpha C-terminal domain (alpha-CTD).

Belongs to the RNA polymerase alpha chain family. In terms of assembly, in plastids the minimal PEP RNA polymerase catalytic core is composed of four subunits: alpha, beta, beta', and beta''. When a (nuclear-encoded) sigma factor is associated with the core the holoenzyme is formed, which can initiate transcription.

The protein resides in the plastid. Its subcellular location is the chloroplast. The catalysed reaction is RNA(n) + a ribonucleoside 5'-triphosphate = RNA(n+1) + diphosphate. Its function is as follows. DNA-dependent RNA polymerase catalyzes the transcription of DNA into RNA using the four ribonucleoside triphosphates as substrates. The polypeptide is DNA-directed RNA polymerase subunit alpha (Ceratophyllum demersum (Rigid hornwort)).